A 114-amino-acid chain; its full sequence is T cell receptor beta variable 5-1 (114 aa).

Positions 1–21 (MGSRLLCWVLLCLLGAGPVKA) are cleaved as a signal peptide. Residues 22–114 (GVTQTPRYLI…SALYLCASSL (93 aa)) enclose the Ig-like domain. The cysteines at positions 42 and 110 are disulfide-linked. N-linked (GlcNAc...) asparagine glycosylation is present at N96.

In terms of assembly, alpha-beta TR is a heterodimer composed of an alpha and beta chain; disulfide-linked. The alpha-beta TR is associated with the transmembrane signaling CD3 coreceptor proteins to form the TR-CD3 (TcR or TCR). The assembly of alpha-beta TR heterodimers with CD3 occurs in the endoplasmic reticulum where a single alpha-beta TR heterodimer associates with one CD3D-CD3E heterodimer, one CD3G-CD3E heterodimer and one CD247 homodimer forming a stable octameric structure. CD3D-CD3E and CD3G-CD3E heterodimers preferentially associate with TR alpha and TR beta chains, respectively. The association of the CD247 homodimer is the last step of TcR assembly in the endoplasmic reticulum and is required for transport to the cell surface.

Its subcellular location is the cell membrane. Its function is as follows. V region of the variable domain of T cell receptor (TR) beta chain that participates in the antigen recognition. Alpha-beta T cell receptors are antigen specific receptors which are essential to the immune response and are present on the cell surface of T lymphocytes. Recognize peptide-major histocompatibility (MH) (pMH) complexes that are displayed by antigen presenting cells (APC), a prerequisite for efficient T cell adaptive immunity against pathogens. Binding of alpha-beta TR to pMH complex initiates TR-CD3 clustering on the cell surface and intracellular activation of LCK that phosphorylates the ITAM motifs of CD3G, CD3D, CD3E and CD247 enabling the recruitment of ZAP70. In turn ZAP70 phosphorylates LAT, which recruits numerous signaling molecules to form the LAT signalosome. The LAT signalosome propagates signal branching to three major signaling pathways, the calcium, the mitogen-activated protein kinase (MAPK) kinase and the nuclear factor NF-kappa-B (NF-kB) pathways, leading to the mobilization of transcription factors that are critical for gene expression and essential for T cell growth and differentiation. The T cell repertoire is generated in the thymus, by V-(D)-J rearrangement. This repertoire is then shaped by intrathymic selection events to generate a peripheral T cell pool of self-MH restricted, non-autoaggressive T cells. Post-thymic interaction of alpha-beta TR with the pMH complexes shapes TR structural and functional avidity. This Homo sapiens (Human) protein is T cell receptor beta variable 5-1.